A 31-amino-acid polypeptide reads, in one-letter code: Cytochrome b6-f complex subunit 6 (31 aa).

The helical transmembrane segment at 4–26 threads the bilayer; that stretch reads ITSYFGFLLAALTITPALLISLN.

This sequence belongs to the PetL family. The 4 large subunits of the cytochrome b6-f complex are cytochrome b6, subunit IV (17 kDa polypeptide, PetD), cytochrome f and the Rieske protein, while the 4 small subunits are PetG, PetL, PetM and PetN. The complex functions as a dimer.

It localises to the plastid. The protein localises to the chloroplast thylakoid membrane. Component of the cytochrome b6-f complex, which mediates electron transfer between photosystem II (PSII) and photosystem I (PSI), cyclic electron flow around PSI, and state transitions. PetL is important for photoautotrophic growth as well as for electron transfer efficiency and stability of the cytochrome b6-f complex. The sequence is that of Cytochrome b6-f complex subunit 6 from Dioscorea elephantipes (Elephant's foot yam).